Consider the following 335-residue polypeptide: Glucose-dependent insulinotropic receptor (335 aa).

At 1–12 (MESSFSFGVILA) the chain is on the extracellular side. A helical membrane pass occupies residues 13–33 (VLASLIIATNTLVAVAVLLLI). Over 34–37 (HKND) the chain is Cytoplasmic. Residues 38 to 58 (GVSLCFTLNLAVADTLIGVAI) traverse the membrane as a helical segment. Over 59–81 (SGLLTDQLSSPSRPTQKTLCSLR) the chain is Extracellular. The chain crosses the membrane as a helical span at residues 82 to 102 (MAFVTSSAAASVLTVMLITFD). The Cytoplasmic segment spans residues 103–125 (RYLAIKQPFRYLKIMSGFVAGAC). The chain crosses the membrane as a helical span at residues 126-146 (IAGLWLVSYLIGFLPLGIPMF). The Extracellular segment spans residues 147-164 (QQTAYKGQCSFFAVFHPH). The helical transmembrane segment at 165 to 185 (FVLTLSCVGFFPAMLLFVFFY) threads the bilayer. Over 186-226 (CDMLKIASMHSQQIRKMEHAGAMAGGYRSPRTPSDFKALRT) the chain is Cytoplasmic. A helical transmembrane segment spans residues 227–247 (VSVLIGSFALSWTPFLITGIV). Topologically, residues 248 to 262 (QVACQECHLYLVLER) are extracellular. A helical membrane pass occupies residues 263–283 (YLWLLGVGNSLLNPLIYAYWQ). Residues 284-335 (KEVRLQLYHMALGVKKVLTSFLLFLSARNCGPERPRESSCHIVTISSSEFDG) are Cytoplasmic-facing.

The protein belongs to the G-protein coupled receptor 1 family. In terms of tissue distribution, predominantly expressed in the pancreas, especially in the islets.

It is found in the cell membrane. Functionally, receptor for the endogenous fatty-acid ethanolamide oleoylethanolamide (OEA) and lysophosphatidylcholine (LPC). Functions as a glucose-dependent insulinotropic receptor. The activity of this receptor is mediated by G proteins which activate adenylate cyclase. Seems to act through a G(s) mediated pathway. This chain is Glucose-dependent insulinotropic receptor (GPR119), found in Homo sapiens (Human).